The chain runs to 629 residues: tRNA uridine 5-carboxymethylaminomethyl modification enzyme MnmG (629 aa).

FAD-binding positions include 15-20, V127, and S182; that span reads GAGHAG. The interval 203 to 226 is disordered; sequence TPPRVKSSTIDYSKTEEQPGDDHP. Residues 215-226 show a composition bias toward basic and acidic residues; it reads SKTEEQPGDDHP. 274 to 288 is an NAD(+) binding site; it reads GARYCPSIEDKIVRF. Residue Q371 coordinates FAD.

This sequence belongs to the MnmG family. Homodimer. Heterotetramer of two MnmE and two MnmG subunits. FAD is required as a cofactor.

Its subcellular location is the cytoplasm. NAD-binding protein involved in the addition of a carboxymethylaminomethyl (cmnm) group at the wobble position (U34) of certain tRNAs, forming tRNA-cmnm(5)s(2)U34. The protein is tRNA uridine 5-carboxymethylaminomethyl modification enzyme MnmG of Listeria innocua serovar 6a (strain ATCC BAA-680 / CLIP 11262).